Reading from the N-terminus, the 328-residue chain is Gonadotropin-releasing hormone receptor (328 aa).

Over 1–38 (MANSASPEQNQNHCSASNSSIPLTQANLPTLTLSGKIR) the chain is Extracellular. A glycan (N-linked (GlcNAc...) asparagine) is linked at N18. The helical transmembrane segment at 39–59 (VTVTFFLFLLSTTFNASFLLK) threads the bilayer. The Cytoplasmic segment spans residues 60–84 (LHKWTQKKENGKKLSKMKVLLKHLT). The helical transmembrane segment at 85 to 105 (LANLLETLIVMPLDGMWNITV) threads the bilayer. Residues 106–115 (QWYAGELLCK) lie on the Extracellular side of the membrane. Residues C114 and C196 are joined by a disulfide bond. Residues 116 to 136 (VLSYLKLFSMYAPAFMMVVIS) form a helical membrane-spanning segment. Residues 137–157 (LDRSLAITRPLAVKSNSKLGR) lie on the Cytoplasmic side of the membrane. Residues 158 to 178 (SMIGLAWLLSSIFAGPQLYIF) form a helical membrane-spanning segment. Residues 179–208 (RMIHLADSSGQTEGFSQCVTHCSFPQWWHQ) lie on the Extracellular side of the membrane. The chain crosses the membrane as a helical span at residues 209–229 (AFYNFFTFSCLFIIPLLFMLI). The Cytoplasmic segment spans residues 230–271 (CNAKIIFTLTRVLHQDPHKLQLNQSKNNIPRARLRTLKMTVA). The helical transmembrane segment at 272-292 (FATSFTVCWTPYYVLGIWYWF) threads the bilayer. Topologically, residues 293-306 (DPEMLNRVSDPVNH) are extracellular. A helical membrane pass occupies residues 307–327 (FFFLFALLNPCFDPLIYGYFS). Residue L328 is a topological domain, cytoplasmic.

It belongs to the G-protein coupled receptor 1 family.

It localises to the cell membrane. Its function is as follows. Receptor for gonadotropin releasing hormone (GnRH) that mediates the action of GnRH to stimulate the secretion of the gonadotropic hormones luteinizing hormone (LH) and follicle-stimulating hormone (FSH). This receptor mediates its action by association with G-proteins that activate a phosphatidylinositol-calcium second messenger system. The sequence is that of Gonadotropin-releasing hormone receptor (GNRHR) from Equus caballus (Horse).